Reading from the N-terminus, the 197-residue chain is Recombination protein RecR (197 aa).

The C4-type zinc finger occupies 57-72; it reads CSRCGYLTDFDPCLIC. The 95-residue stretch at 80–174 folds into the Toprim domain; that stretch reads SLICIGEESS…KVTRLAHGLP (95 aa).

The protein belongs to the RecR family.

Functionally, may play a role in DNA repair. It seems to be involved in an RecBC-independent recombinational process of DNA repair. It may act with RecF and RecO. The sequence is that of Recombination protein RecR from Syntrophomonas wolfei subsp. wolfei (strain DSM 2245B / Goettingen).